We begin with the raw amino-acid sequence, 309 residues long: Aromatic prenyltransferase (309 aa).

It belongs to the aromatic prenyltransferase family.

Functionally, prenyltransferase that attaches isoprenoid moieties to carbon atoms of aromatic substrates in an enzyme-catalyzed Friedel-Crafts reaction. Shows specificity for dimethylallyl diphosphate (DMAPP) and does not accept geranyl diphosphate (GPP) or isopentenyl diphosphate (IPP). Prenylates the artificial substrate 2,7-dihydroxynaphthalene (2,7-DHN), as well as dihydrophenazine-1-carboxylic acid and 4-hydroxybenzoic acid at lower levels. Only traces of products are detected with aspulvinone E or flaviolin as substrates; and no product is formed with L-tryptophan, L-tyrosine, or 4-hydroxyphenylpyruvate. Ptf seems no to be involved in the prenylation reaction in the biosynthesis of aspulvinone H and J and the physiological function of ptf remains unknown. This Sclerotinia sclerotiorum (strain ATCC 18683 / 1980 / Ss-1) (White mold) protein is Aromatic prenyltransferase.